We begin with the raw amino-acid sequence, 391 residues long: Outer membrane protein 41 (391 aa).

The signal sequence occupies residues 1-20; the sequence is MKVKYLMLTLVGAIALNASA. The residue at position 21 (Gln21) is a Pyrrolidone carboxylic acid. One can recognise an OmpA-like domain in the interval 282 to 391; it reads TKTENILTEK…WNRVVIVRSK (110 aa).

It belongs to the outer membrane OOP (TC 1.B.6) superfamily. As to quaternary structure, disulfide-linked heterodimer with Omp40.

The protein resides in the cell outer membrane. May have porin activity and function in peptidoglycan binding. The chain is Outer membrane protein 41 from Porphyromonas gingivalis (strain ATCC BAA-308 / W83).